The chain runs to 208 residues: Anti-sigma-W factor RsiW (208 aa).

At 1–87 (MSCPEQIVQL…ASVKRWFRTH (87 aa)) the chain is on the cytoplasmic side. The Zn(2+) site is built by Cys-3, His-30, Cys-34, and Cys-37. A helical membrane pass occupies residues 88–108 (PVIAAAAVFIILMGGGFFNSW). Over 109–208 (HNDHNFSVSK…LDAFNPNGEE (100 aa)) the chain is Extracellular.

Belongs to the zinc-associated anti-sigma factor (ZAS) superfamily. Anti-sigma-W factor family. As to quaternary structure, forms a heterodimer with cognate sigma factor SigW, which probably prevents SigW from binding to DNA. The cofactor is Zn(2+). Is processed by successive proteolytic events. First, the extracellular region of RsiW is cleaved by PrsW (site-1 cleavage) in response to cell envelope stresses. In a reconstituted E.coli system PrsW cuts between Ala-168 and Ser-169 followed by trimming by E.coli Tsp; the endogenous extracellular exopeptidase responsible for the event in B.subtilis has not been identified. Next, it undergoes cleavage at an intramembrane site (site-2 cleavage) mediated by RasP. This cleavage uncovers a cryptic proteolytic tag with conserved alanine residues in the transmembrane segment, that is recognized mainly by the ClpXP protease, which completely degrades the protein in the cytoplasm and leads to the induction of the sigma-W-controlled genes.

It localises to the cell membrane. Its function is as follows. The anti-sigma factor for extracytoplasmic function (ECF) sigma factor sigma-W (SigW). Holds SigW, its cognate ECF sigma factor, in an inactive form until released by regulated intramembrane proteolysis (RIP). SigW and RsiW mediate cell response to cell wall stress. RIP occurs when an extracytoplasmic signal triggers a concerted proteolytic cascade to transmit information and elicit cellular responses. The membrane-spanning regulatory substrate protein is first cut periplasmically (site-1 protease, S1P, PrsW), then within the membrane itself (site-2 protease, S2P, RasP), while cytoplasmic proteases finish degrading the anti-sigma factor, liberating sigma-W. The protein is Anti-sigma-W factor RsiW (rsiW) of Bacillus subtilis (strain 168).